The chain runs to 223 residues: Membrane-associated progesterone receptor component 2 (223 aa).

Positions 1-33 (MAAGDGDVKLGTLGSGSESSNDGGSESPGDAGA) are disordered. The O-linked (Xyl...) (chondroitin sulfate) serine glycan is linked to serine 15. The span at 15–33 (SGSESSNDGGSESPGDAGA) shows a compositional bias: low complexity. Residues 42–66 (AAALALLTGGGEMLLNVALVALVLL) form a helical membrane-spanning segment. Residues serine 90, serine 104, and serine 208 each carry the phosphoserine modification. A Cytochrome b5 heme-binding domain is found at 102–201 (DFSLEQLRQY…EKYDYVGRLL (100 aa)). The disordered stretch occupies residues 202-223 (KPGEEPSEYTDEEDTKDHNKQD). A compositionally biased stretch (acidic residues) spans 206 to 215 (EPSEYTDEED). Tyrosine 210 carries the post-translational modification Phosphotyrosine. Threonine 211 carries the post-translational modification Phosphothreonine.

Belongs to the cytochrome b5 family. MAPR subfamily. In terms of assembly, interacts with PGRMC1. Interacts with AAAS. As to expression, expressed by endometrial glands and stroma (at protein level). Detected in urine (at protein level).

It is found in the membrane. The protein localises to the nucleus envelope. It localises to the endoplasmic reticulum. Its subcellular location is the secreted. Functionally, required for the maintenance of uterine histoarchitecture and normal female reproductive lifespan. May serve as a universal non-classical progesterone receptor in the uterus. Intracellular heme chaperone required for delivery of labile, or signaling heme, to the nucleus. Plays a role in adipocyte function and systemic glucose homeostasis. In brown fat, which has a high demand for heme, delivery of labile heme in the nucleus regulates the activity of heme-responsive transcriptional repressors such as NR1D1 and BACH1. The protein is Membrane-associated progesterone receptor component 2 of Homo sapiens (Human).